The chain runs to 613 residues: Sulfhydryl oxidase 1 (613 aa).

The signal sequence occupies residues 1–30; sequence MTGCGRRSGWLPPLRLLLLPLLLGGPGVGA. The Thioredoxin domain maps to 37 to 157; sequence YSASDPLTLL…RERLIDALES (121 aa). Active-site nucleophile residues include C71 and C74. Intrachain disulfides connect C71–C74 and C102–C111. Residues N131 and N244 are each glycosylated (N-linked (GlcNAc...) asparagine). C394 and C406 are oxidised to a cystine. The ERV/ALR sulfhydryl oxidase domain maps to 397 to 504; that stretch reads SESHFRGFPC…EDPQFPKVQW (108 aa). Residues R402, W409, and H413 each contribute to the FAD site. Position 427 is a phosphoserine (S427). C450 and C453 are disulfide-bonded. Residues D452, H456, 479–486, K501, and W504 each bind FAD; that span reads WTSHNRVN. C510 and C513 are oxidised to a cystine.

It belongs to the quiescin-sulfhydryl oxidase (QSOX) family. As to quaternary structure, monomer. It depends on FAD as a cofactor. Post-translationally, N-glycosylated. O-glycosylated on Thr and Ser residues. In terms of tissue distribution, detected in endometrium and in uterus glandular epithelial cells (at protein level). Expressed in testis, placenta, pancreas, lung, ovary, endometrium, but not in brain, liver and kidney tissues. Higher expression in epithelial cells.

It localises to the secreted. The catalysed reaction is 2 R'C(R)SH + O2 = R'C(R)S-S(R)CR' + H2O2. In terms of biological role, catalyzes the oxidation of sulfhydryl groups in peptide and protein thiols to disulfides with the reduction of oxygen to hydrogen peroxide. Plays a role in disulfide bond formation in a variety of extracellular proteins. In fibroblasts, required for normal incorporation of laminin into the extracellular matrix, and thereby for normal cell-cell adhesion and cell migration. This chain is Sulfhydryl oxidase 1 (QSOX1), found in Cavia porcellus (Guinea pig).